Reading from the N-terminus, the 158-residue chain is Putative metalloproteinase inhibitor tag-225 (158 aa).

An N-terminal signal peptide occupies residues methionine 1–alanine 20. Position 21 (cysteine 21) interacts with Zn(2+). The tract at residues cysteine 21 to glutamate 25 is involved in metalloproteinase-binding. 3 disulfides stabilise this stretch: cysteine 21-cysteine 96, cysteine 23-cysteine 123, and cysteine 33-cysteine 158. One can recognise an NTR domain in the interval cysteine 21–cysteine 158. Asparagine 79 carries an N-linked (GlcNAc...) asparagine glycan. The involved in metalloproteinase-binding stretch occupies residues alanine 93–proline 94.

It belongs to the protease inhibitor I35 (TIMP) family.

The protein localises to the secreted. Functionally, complexes with metalloproteinases and irreversibly inactivates them by binding to their catalytic zinc cofactor. This chain is Putative metalloproteinase inhibitor tag-225 (tag-225), found in Caenorhabditis elegans.